A 119-amino-acid polypeptide reads, in one-letter code: uncharacterized protein (119 aa).

The N-terminal stretch at 1–18 (MPAVFMLASSSALQCGRG) is a signal peptide. Residues 23-100 (PRTEVGAGHS…MFPGPLRGPA (78 aa)) are disordered. Polar residues predominate over residues 43–71 (GNQTSVIPATSRQAALGTSWTQRRTQPLQ). The N-linked (GlcNAc...) asparagine glycan is linked to N44.

It is found in the secreted. This is an uncharacterized protein from Homo sapiens (Human).